The primary structure comprises 697 residues: Sialidase B (697 aa).

The signal sequence occupies residues 1-29 (MNKRGLYSKLGISVVGISLLMGVPTLIHA). R245 lines the substrate pocket. Catalysis depends on D270, which acts as the Proton acceptor. BNR repeat units lie at residues 280–291 (SYSDDNGKTWSE), 462–473 (TTSQNRGESWEQ), and 517–528 (LISDDSGQTWKK). Residue E541 is part of the active site. Residue R557 coordinates substrate. A BNR 4 repeat occupies 566–577 (MTSRDSGETWSK). R619 provides a ligand contact to substrate. Catalysis depends on Y653, which acts as the Nucleophile.

This sequence belongs to the glycosyl hydrolase 33 family.

It carries out the reaction Hydrolysis of alpha-(2-&gt;3)-, alpha-(2-&gt;6)-, alpha-(2-&gt;8)- glycosidic linkages of terminal sialic acid residues in oligosaccharides, glycoproteins, glycolipids, colominic acid and synthetic substrates.. In Streptococcus pneumoniae serotype 4 (strain ATCC BAA-334 / TIGR4), this protein is Sialidase B (nanB).